The chain runs to 367 residues: Ribosomal RNA large subunit methyltransferase M (367 aa).

S-adenosyl-L-methionine is bound by residues Ser188, 221-224, Asp240, Asp260, and Asp277; that span reads CPGG. The Proton acceptor role is filled by Lys306.

Belongs to the class I-like SAM-binding methyltransferase superfamily. RNA methyltransferase RlmE family. RlmM subfamily. In terms of assembly, monomer.

It is found in the cytoplasm. It carries out the reaction cytidine(2498) in 23S rRNA + S-adenosyl-L-methionine = 2'-O-methylcytidine(2498) in 23S rRNA + S-adenosyl-L-homocysteine + H(+). Its function is as follows. Catalyzes the 2'-O-methylation at nucleotide C2498 in 23S rRNA. This chain is Ribosomal RNA large subunit methyltransferase M, found in Serratia proteamaculans (strain 568).